Reading from the N-terminus, the 346-residue chain is Phosphate acyltransferase (346 aa).

This sequence belongs to the PlsX family. In terms of assembly, homodimer. Probably interacts with PlsY.

The protein localises to the cytoplasm. The enzyme catalyses a fatty acyl-[ACP] + phosphate = an acyl phosphate + holo-[ACP]. It functions in the pathway lipid metabolism; phospholipid metabolism. In terms of biological role, catalyzes the reversible formation of acyl-phosphate (acyl-PO(4)) from acyl-[acyl-carrier-protein] (acyl-ACP). This enzyme utilizes acyl-ACP as fatty acyl donor, but not acyl-CoA. This Brucella abortus (strain S19) protein is Phosphate acyltransferase.